A 419-amino-acid chain; its full sequence is Creatine kinase S-type, mitochondrial (419 aa).

The N-terminal 39 residues, 1 to 39 (MASIFSKLLTGRNASLLFATMGTSVLTTGYLLNRQKVCA), are a transit peptide targeting the mitochondrion. A cardiolipin-binding region spans residues 40-64 (EVREQPRLFPPSADYPDLRKHNNCM). One can recognise a Phosphagen kinase N-terminal domain in the interval 46–132 (RLFPPSADYP…FDPVIKLRHN (87 aa)). Residues 159 to 401 (YVLSSRVRTG…NYLVDCEKKL (243 aa)) form the Phosphagen kinase C-terminal domain. ATP is bound by residues 162–166 (SSRVR) and histidine 225. Tyrosine 255 is modified (phosphotyrosine). Residues arginine 270, arginine 326, 354–359 (RGTGGV), and aspartate 369 each bind ATP. A Phosphothreonine modification is found at threonine 356.

It belongs to the ATP:guanido phosphotransferase family. Exists as an octamer composed of four CKMT2 homodimers. In terms of tissue distribution, sarcomere-specific. Found only in heart and skeletal muscles.

The protein localises to the mitochondrion inner membrane. The enzyme catalyses creatine + ATP = N-phosphocreatine + ADP + H(+). Its function is as follows. Reversibly catalyzes the transfer of phosphate between ATP and various phosphogens (e.g. creatine phosphate). Creatine kinase isoenzymes play a central role in energy transduction in tissues with large, fluctuating energy demands, such as skeletal muscle, heart, brain and spermatozoa. The sequence is that of Creatine kinase S-type, mitochondrial (CKMT2) from Homo sapiens (Human).